A 392-amino-acid chain; its full sequence is Homeobox protein engrailed-1 (392 aa).

4 disordered regions span residues 1–100 (MEEQ…AQLH), 132–164 (ARGG…TRAP), 219–251 (KPSD…PAIL), and 282–306 (SDRP…DKRP). A compositionally biased stretch (low complexity) spans 14-36 (SALGAAAAATPGGLSLSLSPGAS). 2 stretches are compositionally biased toward pro residues: residues 51–66 (SPQP…PCLP) and 75–84 (PPHPPPPPPQ). Low complexity predominate over residues 85 to 100 (HLAAPAHQPQPAAQLH). The segment covering 223–236 (TGGGGSGGGAGSPG) has biased composition (gly residues). Positions 303–362 (DKRPRTAFTAEQLQRLKAEFQANRYITEQRRQTLAQELSLNESQIKIWFQNKRAKIKKAT) form a DNA-binding region, homeobox.

Belongs to the engrailed homeobox family.

Its subcellular location is the nucleus. In terms of biological role, required for proper formation of the apical ectodermal ridge and correct dorsal-ventral patterning in the limb. The sequence is that of Homeobox protein engrailed-1 (EN1) from Homo sapiens (Human).